We begin with the raw amino-acid sequence, 310 residues long: Olfactory receptor 10N1 (310 aa).

Residues 1 to 23 (MDNYTLLNEFILLGIPQTQGLET) are Extracellular-facing. N3 carries N-linked (GlcNAc...) asparagine glycosylation. The helical transmembrane segment at 24–44 (LLFVVFLFIYFFTLLGNSLIF) threads the bilayer. At 45–55 (TAIISSSTLHT) the chain is on the cytoplasmic side. Residues 56 to 76 (PMYFFLGLLSVFDMLFPSVTC) traverse the membrane as a helical segment. Over 77 to 95 (PKMLFYLSVRSPAISYKGC) the chain is Extracellular. A disulfide bridge links C95 with C187. Residues 96–116 (AAQLFFYHLLGSTEGCLYSVM) form a helical membrane-spanning segment. Topologically, residues 117–136 (AYDRYVAICHPLRYMLIMKP) are cytoplasmic. The helical transmembrane segment at 137 to 157 (GVCVSLVIIAWLVGCLHATIL) threads the bilayer. Over 158–202 (TSLTFQLVYCASNQVDYFFCDLPAVLPLACTDSKLARKVGSINVG) the chain is Extracellular. The helical transmembrane segment at 203–223 (FLALMLLFSVCVSYVHIGVAI) threads the bilayer. Topologically, residues 224 to 237 (LRIRSAEGRQKAFS) are cytoplasmic. Residues 238-258 (TCSAHLTAILCAYGPVIIIYL) form a helical membrane-spanning segment. Residues 259 to 264 (QRTPNP) are Extracellular-facing. Residues 265 to 285 (LLGAVVQILNNIVSPMLNSLI) form a helical membrane-spanning segment. Residues 286-310 (YSLRNKEVKRSLRRVFQNITFHGQK) are Cytoplasmic-facing.

This sequence belongs to the G-protein coupled receptor 1 family.

The protein localises to the cell membrane. Its function is as follows. Odorant receptor. The sequence is that of Olfactory receptor 10N1 from Mus musculus (Mouse).